The sequence spans 307 residues: Ribosomal RNA small subunit methyltransferase A (307 aa).

6 residues coordinate S-adenosyl-L-methionine: Asn-35, Val-37, Gly-62, Glu-83, Asp-113, and Asn-136.

Belongs to the class I-like SAM-binding methyltransferase superfamily. rRNA adenine N(6)-methyltransferase family. RsmA subfamily.

It is found in the cytoplasm. The enzyme catalyses adenosine(1518)/adenosine(1519) in 16S rRNA + 4 S-adenosyl-L-methionine = N(6)-dimethyladenosine(1518)/N(6)-dimethyladenosine(1519) in 16S rRNA + 4 S-adenosyl-L-homocysteine + 4 H(+). Specifically dimethylates two adjacent adenosines (A1518 and A1519) in the loop of a conserved hairpin near the 3'-end of 16S rRNA in the 30S particle. May play a critical role in biogenesis of 30S subunits. This chain is Ribosomal RNA small subunit methyltransferase A, found in Bifidobacterium longum subsp. infantis (strain ATCC 15697 / DSM 20088 / JCM 1222 / NCTC 11817 / S12).